A 104-amino-acid polypeptide reads, in one-letter code: L-rhamnose mutarotase (104 aa).

Y18 lines the substrate pocket. H22 (proton donor) is an active-site residue. Substrate is bound by residues Y41 and 76-77; that span reads WW.

The protein belongs to the rhamnose mutarotase family. As to quaternary structure, homodimer.

The protein localises to the cytoplasm. The catalysed reaction is alpha-L-rhamnose = beta-L-rhamnose. The protein operates within carbohydrate metabolism; L-rhamnose metabolism. In terms of biological role, involved in the anomeric conversion of L-rhamnose. The chain is L-rhamnose mutarotase from Phocaeicola vulgatus (strain ATCC 8482 / DSM 1447 / JCM 5826 / CCUG 4940 / NBRC 14291 / NCTC 11154) (Bacteroides vulgatus).